We begin with the raw amino-acid sequence, 527 residues long: Phosphoenolpyruvate carboxykinase (ATP) (527 aa).

Substrate is bound by residues Arg-56, Tyr-191, and Lys-197. Residues Lys-197, His-216, and 232-240 each bind ATP; that span reads GLSGTGKTT. Residues Lys-197 and His-216 each coordinate Mn(2+). A Mn(2+)-binding site is contributed by Asp-253. ATP-binding positions include Glu-281, Arg-318, 437-438, and Thr-443; that span reads RI. Residue Arg-318 coordinates substrate.

This sequence belongs to the phosphoenolpyruvate carboxykinase (ATP) family. It depends on Mn(2+) as a cofactor.

The protein resides in the cytoplasm. The enzyme catalyses oxaloacetate + ATP = phosphoenolpyruvate + ADP + CO2. Its pathway is carbohydrate biosynthesis; gluconeogenesis. Functionally, involved in the gluconeogenesis. Catalyzes the conversion of oxaloacetate (OAA) to phosphoenolpyruvate (PEP) through direct phosphoryl transfer between the nucleoside triphosphate and OAA. In Shouchella clausii (strain KSM-K16) (Alkalihalobacillus clausii), this protein is Phosphoenolpyruvate carboxykinase (ATP).